The chain runs to 815 residues: Phenylalanine--tRNA ligase beta subunit (815 aa).

The 110-residue stretch at 39-148 (SKELQKFEVA…KDAVVGDNFT (110 aa)) folds into the tRNA-binding domain. The region spanning 421-496 (PQKKPLDFSV…RIYGYDKIES (76 aa)) is the B5 domain. D474, D480, E483, and E484 together coordinate Mg(2+). In terms of domain architecture, FDX-ACB spans 721–814 (SDYQANFRDY…ISQKFQGILR (94 aa)).

The protein belongs to the phenylalanyl-tRNA synthetase beta subunit family. Type 1 subfamily. As to quaternary structure, tetramer of two alpha and two beta subunits. It depends on Mg(2+) as a cofactor.

It is found in the cytoplasm. It catalyses the reaction tRNA(Phe) + L-phenylalanine + ATP = L-phenylalanyl-tRNA(Phe) + AMP + diphosphate + H(+). The polypeptide is Phenylalanine--tRNA ligase beta subunit (pheT) (Rickettsia prowazekii (strain Madrid E)).